A 1567-amino-acid polypeptide reads, in one-letter code: Myosin-2A (1567 aa).

Residues 4–57 (EVGTRCWYPSKEQGWIGAEVTKNDLKDGTYFMELTLEDNEVVNVETKDLTNEKD) form the Myosin N-terminal SH3-like domain. The region spanning 70 to 786 (ESTEDLTTLS…MLAYFEKLRS (717 aa)) is the Myosin motor domain. Position 164–171 (164–171 (GESGAGKT)) interacts with ATP. Residues 446 to 526 (FIGVLDIYGF…LGILSLLDEE (81 aa)) form an actin-binding region. The segment at 619–640 (EEAKKNAASQDQKQLKKPTPIR) is disordered. IQ domains lie at 789 to 818 (MNSA…SLSL), 812 to 836 (MKAS…EYEL), 837 to 859 (EQHA…YISG), 860 to 884 (VISS…QSKY), 885 to 907 (ESNA…AYES), and 908 to 937 (KRRD…DAKS). Positions 947–1091 (KLENKVIQLT…LAHLQTSIAL (145 aa)) form a coiled coil. The tract at residues 1092 to 1567 (GTVTTNTNIV…VAQQVTVPDA (476 aa)) is non alpha-helical, tail domain. The Dilute domain occupies 1230 to 1505 (AQVLTTIQKV…LKYVADIVKK (276 aa)).

It belongs to the TRAFAC class myosin-kinesin ATPase superfamily. Myosin family. In terms of assembly, homodimer. Interacts with calmodulin (CMD1) and the myosin light chain MLC1 through its IQ repeats.

Its function is as follows. Myosin heavy chain that is required for the cell cycle-regulated transport of various organelles and proteins for their segregation. Functions by binding with its tail domain to receptor proteins on organelles and exerting force with its N-terminal motor domain against actin filaments, thereby transporting its cargo along polarized actin cables. In Naumovozyma castellii (Yeast), this protein is Myosin-2A (MYO2A).